A 440-amino-acid chain; its full sequence is Enolase (440 aa).

Q163 lines the (2R)-2-phosphoglycerate pocket. The active-site Proton donor is E205. Mg(2+) is bound by residues D242, E288, and D315. 4 residues coordinate (2R)-2-phosphoglycerate: K340, R369, S370, and K391. The active-site Proton acceptor is K340.

The protein belongs to the enolase family. The cofactor is Mg(2+).

The protein resides in the cytoplasm. Its subcellular location is the secreted. The protein localises to the cell surface. The enzyme catalyses (2R)-2-phosphoglycerate = phosphoenolpyruvate + H2O. Its pathway is carbohydrate degradation; glycolysis; pyruvate from D-glyceraldehyde 3-phosphate: step 4/5. Functionally, catalyzes the reversible conversion of 2-phosphoglycerate (2-PG) into phosphoenolpyruvate (PEP). It is essential for the degradation of carbohydrates via glycolysis. In Pediococcus pentosaceus (strain ATCC 25745 / CCUG 21536 / LMG 10740 / 183-1w), this protein is Enolase.